The following is a 316-amino-acid chain: MTNFKLKIASRRSKLAMVQTLWVKDQLEKNIPNLEVSIEAMATQGDKILDVALAKIGDKGLFTKELEAQMLVGHADIAVHSLKDLPTNLPNGLKLGCITKREDPADALVVNKKNDCYKLENLPEGSIVGTSSLRRLAQLRNKYPHLVFKDIRGNVITRIEKLDAGEFDCIILAAAGLKRLGFESRIHQIIPSEVSLHAVGQGALGIECKSDDKKVLEIISILEDKPTCQRCLAERAFLRELEGGCQVPIGVNSKIQNEQLCLTGMVASLDGERLIKDQYIGDINDPEEVGKELAKKLKQQGAEEILSEIFKKFREK.

An S-(dipyrrolylmethanemethyl)cysteine modification is found at Cys245.

The protein belongs to the HMBS family. In terms of assembly, monomer. Dipyrromethane serves as cofactor.

It catalyses the reaction 4 porphobilinogen + H2O = hydroxymethylbilane + 4 NH4(+). It participates in porphyrin-containing compound metabolism; protoporphyrin-IX biosynthesis; coproporphyrinogen-III from 5-aminolevulinate: step 2/4. It functions in the pathway porphyrin-containing compound metabolism; chlorophyll biosynthesis. Its function is as follows. Tetrapolymerization of the monopyrrole PBG into the hydroxymethylbilane pre-uroporphyrinogen in several discrete steps. This Prochlorococcus marinus (strain AS9601) protein is Porphobilinogen deaminase.